A 317-amino-acid polypeptide reads, in one-letter code: Melanocyte-stimulating hormone receptor (317 aa).

Over 1-37 (MVWQGPQRRLLGSLNGTSPATPHFELAANQTGPRCLE) the chain is Extracellular. N-linked (GlcNAc...) asparagine glycans are attached at residues Asn15 and Asn29. Residues 38 to 63 (VSIPNGLFLSLGLVSVVENVLVVAAI) traverse the membrane as a helical segment. The Cytoplasmic portion of the chain corresponds to 64 to 72 (AKNRNLHSP). Residues 73-93 (MYYFIGCLAVSDLLVSVTNVL) form a helical membrane-spanning segment. At 94-118 (ETAVMLLVEAGALAAQAAVVQQLDD) the chain is on the extracellular side. Residues 119 to 140 (IIDVLICGSMVSSLCFLGAIAV) traverse the membrane as a helical segment. At 141–163 (DRYLSIFYALRYHSIVTLPRAWR) the chain is on the cytoplasmic side. A helical transmembrane segment spans residues 164–183 (AISAIWVASVLSSTLFIAYY). Topologically, residues 184 to 191 (NHTAVLLC) are extracellular. Residues 192–211 (LVSFFVAMLVLMAVLYVHML) form a helical membrane-spanning segment. At 212–240 (ARARQHARGIARLRKRQHSVHQGFGLKGA) the chain is on the cytoplasmic side. A helical transmembrane segment spans residues 241–266 (ATLTILLGIFFLCWGPFFLHLSLMVL). At 267 to 279 (CPQHPICGCVFQN) the chain is on the extracellular side. Residues 280-300 (FNLFLTLIICNSIIDPFIYAF) form a helical membrane-spanning segment. Residues 301–317 (RSQELRKTLQEVVLCSW) lie on the Cytoplasmic side of the membrane. The S-palmitoyl cysteine moiety is linked to residue Cys315.

Belongs to the G-protein coupled receptor 1 family. Interacts with MGRN1, but does not undergo MGRN1-mediated ubiquitination; this interaction competes with GNAS-binding and thus inhibits agonist-induced cAMP production. Interacts with OPN3; the interaction results in a decrease in MC1R-mediated cAMP signaling and ultimately a decrease in melanin production in melanocytes.

Its subcellular location is the cell membrane. Its function is as follows. Receptor for MSH (alpha, beta and gamma) and ACTH. The activity of this receptor is mediated by G proteins which activate adenylate cyclase. Mediates melanogenesis, the production of eumelanin (black/brown) and phaeomelanin (red/yellow), via regulation of cAMP signaling in melanocytes. This chain is Melanocyte-stimulating hormone receptor (MC1R), found in Canis lupus familiaris (Dog).